Here is a 238-residue protein sequence, read N- to C-terminus: Orotidine 5'-phosphate decarboxylase (238 aa).

Substrate contacts are provided by residues D10, K32, 59-68 (DLKLHDIPNT), T122, R184, Q193, G213, and R214. The active-site Proton donor is K61.

Belongs to the OMP decarboxylase family. Type 1 subfamily. As to quaternary structure, homodimer.

The catalysed reaction is orotidine 5'-phosphate + H(+) = UMP + CO2. Its pathway is pyrimidine metabolism; UMP biosynthesis via de novo pathway; UMP from orotate: step 2/2. Catalyzes the decarboxylation of orotidine 5'-monophosphate (OMP) to uridine 5'-monophosphate (UMP). This chain is Orotidine 5'-phosphate decarboxylase, found in Bacillus cereus (strain AH820).